Reading from the N-terminus, the 137-residue chain is Small ribosomal subunit protein uS11 (137 aa).

The disordered stretch occupies residues 116-137; that stretch reads EDVTPIPHDGTRRPGGKRGRRV.

This sequence belongs to the universal ribosomal protein uS11 family. As to quaternary structure, part of the 30S ribosomal subunit.

In terms of biological role, located on the platform of the 30S subunit. In Methanopyrus kandleri (strain AV19 / DSM 6324 / JCM 9639 / NBRC 100938), this protein is Small ribosomal subunit protein uS11.